The chain runs to 613 residues: Dihydroxy-acid dehydratase (613 aa).

D81 contacts Mg(2+). Residue C122 participates in [2Fe-2S] cluster binding. Residues D123 and K124 each coordinate Mg(2+). K124 is subject to N6-carboxylysine. Position 195 (C195) interacts with [2Fe-2S] cluster. Residue E491 coordinates Mg(2+). S517 (proton acceptor) is an active-site residue.

The protein belongs to the IlvD/Edd family. In terms of assembly, homodimer. Requires [2Fe-2S] cluster as cofactor. It depends on Mg(2+) as a cofactor.

The catalysed reaction is (2R)-2,3-dihydroxy-3-methylbutanoate = 3-methyl-2-oxobutanoate + H2O. It carries out the reaction (2R,3R)-2,3-dihydroxy-3-methylpentanoate = (S)-3-methyl-2-oxopentanoate + H2O. It participates in amino-acid biosynthesis; L-isoleucine biosynthesis; L-isoleucine from 2-oxobutanoate: step 3/4. The protein operates within amino-acid biosynthesis; L-valine biosynthesis; L-valine from pyruvate: step 3/4. Functionally, functions in the biosynthesis of branched-chain amino acids. Catalyzes the dehydration of (2R,3R)-2,3-dihydroxy-3-methylpentanoate (2,3-dihydroxy-3-methylvalerate) into 2-oxo-3-methylpentanoate (2-oxo-3-methylvalerate) and of (2R)-2,3-dihydroxy-3-methylbutanoate (2,3-dihydroxyisovalerate) into 2-oxo-3-methylbutanoate (2-oxoisovalerate), the penultimate precursor to L-isoleucine and L-valine, respectively. This Vibrio atlanticus (strain LGP32) (Vibrio splendidus (strain Mel32)) protein is Dihydroxy-acid dehydratase.